The chain runs to 248 residues: Probable transcriptional regulatory protein PSPA7_4544 (248 aa).

Belongs to the TACO1 family.

The protein resides in the cytoplasm. The chain is Probable transcriptional regulatory protein PSPA7_4544 from Pseudomonas paraeruginosa (strain DSM 24068 / PA7) (Pseudomonas aeruginosa (strain PA7)).